The primary structure comprises 499 residues: Rhamnogalacturonan I rhamnosyltransferase 1 (499 aa).

The chain crosses the membrane as a helical; Signal-anchor for type II membrane protein span at residues 31–50; it reads WFVRVCSSILVWTCLVQLFA. Asn88, Asn121, and Asn207 each carry an N-linked (GlcNAc...) asparagine glycan. Residue 261-263 coordinates substrate; sequence HLR. N-linked (GlcNAc...) asparagine glycosylation is found at Asn375, Asn435, and Asn496.

It belongs to the glycosyltransferase GT106 family.

The protein resides in the golgi apparatus membrane. The catalysed reaction is alpha-D-galacturonosyl-[(1-&gt;2)-alpha-L-rhamnosyl-(1-&gt;4)-alpha-D-galacturonosyl](n) + UDP-beta-L-rhamnose = [(1-&gt;2)-alpha-L-rhamnosyl-(1-&gt;4)-alpha-D-galacturonosyl](n+1) + UDP + H(+). The protein operates within glycan metabolism; pectin biosynthesis. In terms of biological role, glycosyltransferase involved in the formation of rhamnogalacturonan I (RG-I) oligosaccharides in the seed coat mucilage, which is a specialized cell wall with abundant RG-I. Transfers the rhamnose residue from UDP-beta-L-rhamnose to RG-I oligosaccharides. The polypeptide is Rhamnogalacturonan I rhamnosyltransferase 1 (Arabidopsis thaliana (Mouse-ear cress)).